Consider the following 432-residue polypeptide: Enolase (432 aa).

Residue Q167 coordinates (2R)-2-phosphoglycerate. The Proton donor role is filled by E209. Mg(2+)-binding residues include D246, E290, and D317. The (2R)-2-phosphoglycerate site is built by K342, R371, S372, and K393. K342 acts as the Proton acceptor in catalysis.

Belongs to the enolase family. In terms of assembly, component of the RNA degradosome, a multiprotein complex involved in RNA processing and mRNA degradation. Mg(2+) is required as a cofactor.

It is found in the cytoplasm. The protein resides in the secreted. The protein localises to the cell surface. The catalysed reaction is (2R)-2-phosphoglycerate = phosphoenolpyruvate + H2O. It participates in carbohydrate degradation; glycolysis; pyruvate from D-glyceraldehyde 3-phosphate: step 4/5. Functionally, catalyzes the reversible conversion of 2-phosphoglycerate (2-PG) into phosphoenolpyruvate (PEP). It is essential for the degradation of carbohydrates via glycolysis. The chain is Enolase from Klebsiella pneumoniae (strain 342).